A 154-amino-acid polypeptide reads, in one-letter code: ATP synthase subunit b (154 aa).

The chain crosses the membrane as a helical span at residues 9-29; it reads AIAFVIFVWFCMKYVWPPLMA.

It belongs to the ATPase B chain family. In terms of assembly, F-type ATPases have 2 components, F(1) - the catalytic core - and F(0) - the membrane proton channel. F(1) has five subunits: alpha(3), beta(3), gamma(1), delta(1), epsilon(1). F(0) has three main subunits: a(1), b(2) and c(10-14). The alpha and beta chains form an alternating ring which encloses part of the gamma chain. F(1) is attached to F(0) by a central stalk formed by the gamma and epsilon chains, while a peripheral stalk is formed by the delta and b chains.

The protein resides in the cell inner membrane. Functionally, f(1)F(0) ATP synthase produces ATP from ADP in the presence of a proton or sodium gradient. F-type ATPases consist of two structural domains, F(1) containing the extramembraneous catalytic core and F(0) containing the membrane proton channel, linked together by a central stalk and a peripheral stalk. During catalysis, ATP synthesis in the catalytic domain of F(1) is coupled via a rotary mechanism of the central stalk subunits to proton translocation. Its function is as follows. Component of the F(0) channel, it forms part of the peripheral stalk, linking F(1) to F(0). The protein is ATP synthase subunit b of Klebsiella pneumoniae subsp. pneumoniae (strain ATCC 700721 / MGH 78578).